The sequence spans 429 residues: Adenylosuccinate synthetase (429 aa).

GTP is bound by residues 12–18 (GDEGKGK) and 40–42 (GHT). Residue Asp13 is the Proton acceptor of the active site. Mg(2+) is bound by residues Asp13 and Gly40. IMP-binding positions include 13 to 16 (DEGK), 38 to 41 (NAGH), Thr129, Arg143, Gln224, Thr239, and Arg303. His41 (proton donor) is an active-site residue. 299–305 (VTTGRAR) is a substrate binding site. Residues Arg305, 331–333 (KLD), and 413–415 (GVG) each bind GTP.

It belongs to the adenylosuccinate synthetase family. Homodimer. Mg(2+) serves as cofactor.

The protein localises to the cytoplasm. The catalysed reaction is IMP + L-aspartate + GTP = N(6)-(1,2-dicarboxyethyl)-AMP + GDP + phosphate + 2 H(+). Its pathway is purine metabolism; AMP biosynthesis via de novo pathway; AMP from IMP: step 1/2. Plays an important role in the de novo pathway of purine nucleotide biosynthesis. Catalyzes the first committed step in the biosynthesis of AMP from IMP. This Rhodococcus opacus (strain B4) protein is Adenylosuccinate synthetase.